Consider the following 142-residue polypeptide: MDLRLTYVFIVAILKGVLCEVKLEESGGGLVQPGMSVKLSCATSGFTFSDYWMEWVRQAPGKGLEWVAEIRNKANNYVAYYGKSLKGRFTLSRDDSKSIVYLQMNNIRSEDTGIYYCSRGYGGYSENWFVYWGQGTLVTVSS.

Positions 1-19 are cleaved as a signal peptide; that stretch reads MDLRLTYVFIVAILKGVLC. Residues 20-133 enclose the Ig-like domain; that stretch reads EVKLEESGGG…YSENWFVYWG (114 aa).

This Rattus norvegicus (Rat) protein is Ig heavy chain V region IR2.